The sequence spans 314 residues: Methionyl-tRNA formyltransferase (314 aa).

113 to 116 (SLLP) is a binding site for (6S)-5,6,7,8-tetrahydrofolate.

This sequence belongs to the Fmt family.

It catalyses the reaction L-methionyl-tRNA(fMet) + (6R)-10-formyltetrahydrofolate = N-formyl-L-methionyl-tRNA(fMet) + (6S)-5,6,7,8-tetrahydrofolate + H(+). Functionally, attaches a formyl group to the free amino group of methionyl-tRNA(fMet). The formyl group appears to play a dual role in the initiator identity of N-formylmethionyl-tRNA by promoting its recognition by IF2 and preventing the misappropriation of this tRNA by the elongation apparatus. The sequence is that of Methionyl-tRNA formyltransferase from Pseudomonas syringae pv. syringae (strain B728a).